Reading from the N-terminus, the 291-residue chain is ATP synthase gamma chain (291 aa).

It belongs to the ATPase gamma chain family. As to quaternary structure, F-type ATPases have 2 components, CF(1) - the catalytic core - and CF(0) - the membrane proton channel. CF(1) has five subunits: alpha(3), beta(3), gamma(1), delta(1), epsilon(1). CF(0) has three main subunits: a, b and c.

Its subcellular location is the cell inner membrane. In terms of biological role, produces ATP from ADP in the presence of a proton gradient across the membrane. The gamma chain is believed to be important in regulating ATPase activity and the flow of protons through the CF(0) complex. The protein is ATP synthase gamma chain of Pelagibacter ubique (strain HTCC1062).